The primary structure comprises 274 residues: Large ribosomal subunit protein uL2cz/uL2cy (274 aa).

The disordered stretch occupies residues 224 to 253; the sequence is NPIDHPHGGGEGRAPIGRKKPTTPWGYPAL.

This sequence belongs to the universal ribosomal protein uL2 family. As to quaternary structure, part of the 50S ribosomal subunit.

The protein localises to the plastid. In Epifagus virginiana (Beechdrops), this protein is Large ribosomal subunit protein uL2cz/uL2cy (rpl2-A).